The chain runs to 261 residues: 5'-nucleotidase SurE (261 aa).

Positions 12, 13, 43, and 100 each coordinate a divalent metal cation.

This sequence belongs to the SurE nucleotidase family. Requires a divalent metal cation as cofactor.

It localises to the cytoplasm. It catalyses the reaction a ribonucleoside 5'-phosphate + H2O = a ribonucleoside + phosphate. Nucleotidase that shows phosphatase activity on nucleoside 5'-monophosphates. This is 5'-nucleotidase SurE from Protochlamydia amoebophila (strain UWE25).